The primary structure comprises 191 residues: Threonylcarbamoyl-AMP synthase (191 aa).

Residues Gln7 to Arg191 form the YrdC-like domain.

The protein belongs to the SUA5 family. TsaC subfamily.

The protein resides in the cytoplasm. The enzyme catalyses L-threonine + hydrogencarbonate + ATP = L-threonylcarbamoyladenylate + diphosphate + H2O. Its function is as follows. Required for the formation of a threonylcarbamoyl group on adenosine at position 37 (t(6)A37) in tRNAs that read codons beginning with adenine. Catalyzes the conversion of L-threonine, HCO(3)(-)/CO(2) and ATP to give threonylcarbamoyl-AMP (TC-AMP) as the acyladenylate intermediate, with the release of diphosphate. The sequence is that of Threonylcarbamoyl-AMP synthase from Psychromonas ingrahamii (strain DSM 17664 / CCUG 51855 / 37).